Consider the following 884-residue polypeptide: Alanine--tRNA ligase (884 aa).

Zn(2+)-binding residues include His-572, His-576, Cys-673, and His-677.

Belongs to the class-II aminoacyl-tRNA synthetase family. Requires Zn(2+) as cofactor.

Its subcellular location is the cytoplasm. It catalyses the reaction tRNA(Ala) + L-alanine + ATP = L-alanyl-tRNA(Ala) + AMP + diphosphate. In terms of biological role, catalyzes the attachment of alanine to tRNA(Ala) in a two-step reaction: alanine is first activated by ATP to form Ala-AMP and then transferred to the acceptor end of tRNA(Ala). Also edits incorrectly charged Ser-tRNA(Ala) and Gly-tRNA(Ala) via its editing domain. The polypeptide is Alanine--tRNA ligase (Xylella fastidiosa (strain M12)).